Here is a 388-residue protein sequence, read N- to C-terminus: 4-hydroxycoumarin synthase 2 (388 aa).

Cys159 is an active-site residue.

This sequence belongs to the thiolase-like superfamily. Chalcone/stilbene synthases family. As to quaternary structure, homodimer.

The catalysed reaction is 2-hydroxybenzoyl-CoA + malonyl-CoA = 4-hydroxycoumarin + CO2 + 2 CoA. Type III polyketide synthase involved preferentially in the biosynthesis of 4-hydroxycoumarin from salicoyl-CoA. Can also use benzoyl-CoA and malonyl-CoA to produce 3,5-dihydroxybiphenyl as a major product and benzoyldiacetic acid lactone as a minor side product. Can also use m-hydroxybenzoyl-CoA as substrate, producing m-hydroxybenzoyl diacetic acid lactone as a derailment product. No activity with p-hydroxybenzoyl-CoA, CoA-linked cinnamic acids or acetyl-CoA. In Sorbus aucuparia (European mountain ash), this protein is 4-hydroxycoumarin synthase 2 (BIS3).